Here is a 341-residue protein sequence, read N- to C-terminus: Gibberellin 2-beta-dioxygenase 2 (341 aa).

The region spanning 179–283 (KSDSCLRLNH…RISMIYFGGP (105 aa)) is the Fe2OG dioxygenase domain. Residues His207, Asp209, and His264 each coordinate Fe cation. The active site involves Arg274. Position 274 (Arg274) interacts with 2-oxoglutarate.

Belongs to the iron/ascorbate-dependent oxidoreductase family. GA2OX subfamily. Fe(2+) serves as cofactor. As to expression, preferentially expressed in flowers, siliques, and upper stems. Expressed in cotyledons, at the base of the shoot apical meristem and developing leaf primordia.

The catalysed reaction is gibberellin A1 + 2-oxoglutarate + O2 = gibberellin A8 + succinate + CO2. Its pathway is plant hormone biosynthesis; gibberellin biosynthesis. Catalyzes the 2-beta-hydroxylation of several biologically active gibberellins, leading to the homeostatic regulation of their endogenous level. Catabolism of gibberellins (GAs) plays a central role in plant development. Converts GA9/GA20 to GA51/GA29 and GA4/GA1 to GA34/GA8. This is Gibberellin 2-beta-dioxygenase 2 (GA2OX2) from Arabidopsis thaliana (Mouse-ear cress).